We begin with the raw amino-acid sequence, 366 residues long: MKKILLTCLLASASFQVSSHTSEVLSGYWAYQEFLEKFPQQGVLTRELSEVVRNAPVPLKSHQSKPIRISVVFPGQQISDYWVRNLSAFEKRMDKLQISYQINQVFTRPNADVKQQSVSLMEALKSKSDYLIFTLDTTRHRKFIEHVLDSSETKLILQNITTPVQAWDKRQPFLYVGFDHAEGSIALADKFKQLYPQGANYSVLYFSEGYVSDARGDTFIHQMNHSDRFALKSSFYTKATKASGYESAKNSLERYPDVDFIYACSTDVALGAIDALKELGRTNIKINGWGGGSAELDAIAVGDLDLTVMRMNDDTGIAMAEAIKWDIEGRTVPTVFSGDFEVVTKEDSPEHIELLKKRAFRYSDQP.

A signal peptide spans 1–13 (MKKILLTCLLASA).

It belongs to the bacterial solute-binding protein 2 family.

The protein resides in the periplasm. Its function is as follows. Binds to an autoinducer molecule. This complex then interacts with the LuxQ sensor protein. This is Autoinducer 2-binding periplasmic protein LuxP (luxP) from Vibrio vulnificus (strain YJ016).